A 308-amino-acid chain; its full sequence is tRNA uridine(34) hydroxylase (308 aa).

In terms of domain architecture, Rhodanese spans 129–223 (QEKDVLILDA…YGKHPETQGV (95 aa)). C183 serves as the catalytic Cysteine persulfide intermediate.

It belongs to the TrhO family.

It carries out the reaction uridine(34) in tRNA + AH2 + O2 = 5-hydroxyuridine(34) in tRNA + A + H2O. Catalyzes oxygen-dependent 5-hydroxyuridine (ho5U) modification at position 34 in tRNAs. This Aster yellows witches'-broom phytoplasma (strain AYWB) protein is tRNA uridine(34) hydroxylase.